A 224-amino-acid chain; its full sequence is Myogenin (224 aa).

A phosphoserine; by CaMK2G mark is found at serine 77 and serine 79. One can recognise a bHLH domain in the interval 81–132 (DRRRAATLREKRRLKKVNEAFEALKRSTLLNPNQRLPKVEILRSAIQYIERL). Threonine 87 bears the Phosphothreonine; by CaMK2G mark.

As to quaternary structure, homodimer and heterodimer with E12; heterodimerization enhances MYOG DNA-binding and transcriptional activities. Interacts with SMARCA4/BRG1/BAF190A. Interacts (via C-terminal region) with SSRP1 and SUPT16H; the interaction is indicative of an interaction with the FACT complex. Interacts with CSRP3. In terms of processing, phosphorylated by CAMK2G on threonine and serine amino acids in a muscle activity-dependent manner. Phosphorylation of Thr-87 impairs both DNA-binding and trans-activation functions in contracting muscles.

Its subcellular location is the nucleus. Functionally, acts as a transcriptional activator that promotes transcription of muscle-specific target genes and plays a role in muscle differentiation, cell cycle exit and muscle atrophy. Essential for the development of functional embryonic skeletal fiber muscle differentiation. However is dispensable for postnatal skeletal muscle growth; phosphorylation by CAMK2G inhibits its transcriptional activity in respons to muscle activity. Required for the recruitment of the FACT complex to muscle-specific promoter regions, thus promoting gene expression initiation. During terminal myoblast differentiation, plays a role as a strong activator of transcription at loci with an open chromatin structure previously initiated by MYOD1. Together with MYF5 and MYOD1, co-occupies muscle-specific gene promoter core regions during myogenesis. Also cooperates with myocyte-specific enhancer factor MEF2D and BRG1-dependent recruitment of SWI/SNF chromatin-remodeling enzymes to alter chromatin structure at myogenic late gene promoters. Facilitates cell cycle exit during terminal muscle differentiation through the up-regulation of miR-20a expression, which in turn represses genes involved in cell cycle progression. Binds to the E-box containing (E1) promoter region of the miR-20a gene. Also plays a role in preventing reversal of muscle cell differentiation. Contributes to the atrophy-related gene expression in adult denervated muscles. Induces fibroblasts to differentiate into myoblasts. The protein is Myogenin (MYOG) of Bos taurus (Bovine).